The sequence spans 141 residues: Hemoglobin subunit alpha-A (141 aa).

The Globin domain maps to 1–141 (VLSGSDKTNV…VGNVLTAKYR (141 aa)). Residue His58 participates in O2 binding. Position 87 (His87) interacts with heme b.

The protein belongs to the globin family. As to quaternary structure, heterotetramer of two alpha chains and two beta chains. Red blood cells.

Functionally, involved in oxygen transport from the lung to the various peripheral tissues. The chain is Hemoglobin subunit alpha-A (HBAA) from Vultur gryphus (Andean condor).